Reading from the N-terminus, the 195-residue chain is Probable GTP-binding protein EngB (195 aa).

Residues 24-195 (ELPEIALAGR…EAWDAILEKL (172 aa)) enclose the EngB-type G domain. GTP is bound by residues 32-39 (GRSNVGKS), 59-63 (GKTQL), 77-80 (DVPG), 144-147 (TKAD), and 176-178 (FSS). Ser39 and Thr61 together coordinate Mg(2+).

Belongs to the TRAFAC class TrmE-Era-EngA-EngB-Septin-like GTPase superfamily. EngB GTPase family. Requires Mg(2+) as cofactor.

In terms of biological role, necessary for normal cell division and for the maintenance of normal septation. The polypeptide is Probable GTP-binding protein EngB (Streptococcus pneumoniae serotype 4 (strain ATCC BAA-334 / TIGR4)).